The chain runs to 131 residues: Large ribosomal subunit protein bL19c (131 aa).

This sequence belongs to the bacterial ribosomal protein bL19 family.

It is found in the plastid. Its subcellular location is the cyanelle. This protein is located at the 30S-50S ribosomal subunit interface and may play a role in the structure and function of the aminoacyl-tRNA binding site. This Cyanophora paradoxa protein is Large ribosomal subunit protein bL19c (rpl19).